A 132-amino-acid chain; its full sequence is Small ribosomal subunit protein uS8 (132 aa).

Belongs to the universal ribosomal protein uS8 family. In terms of assembly, part of the 30S ribosomal subunit. Contacts proteins S5 and S12.

One of the primary rRNA binding proteins, it binds directly to 16S rRNA central domain where it helps coordinate assembly of the platform of the 30S subunit. The chain is Small ribosomal subunit protein uS8 from Francisella tularensis subsp. holarctica (strain FTNF002-00 / FTA).